The sequence spans 323 residues: Phosphoribosylformylglycinamidine cyclo-ligase (323 aa).

It belongs to the AIR synthase family.

It is found in the cytoplasm. It catalyses the reaction 2-formamido-N(1)-(5-O-phospho-beta-D-ribosyl)acetamidine + ATP = 5-amino-1-(5-phospho-beta-D-ribosyl)imidazole + ADP + phosphate + H(+). It participates in purine metabolism; IMP biosynthesis via de novo pathway; 5-amino-1-(5-phospho-D-ribosyl)imidazole from N(2)-formyl-N(1)-(5-phospho-D-ribosyl)glycinamide: step 2/2. The polypeptide is Phosphoribosylformylglycinamidine cyclo-ligase (Saccharolobus solfataricus (strain ATCC 35092 / DSM 1617 / JCM 11322 / P2) (Sulfolobus solfataricus)).